Consider the following 453-residue polypeptide: tRNA modification GTPase MnmE (453 aa).

The (6S)-5-formyl-5,6,7,8-tetrahydrofolate site is built by Arg22, Glu79, and Lys119. Residues 215–376 (GMKVVIAGRP…LREHLKACMG (162 aa)) form the TrmE-type G domain. K(+) is bound at residue Asn225. Residues 225 to 230 (NAGKSS), 244 to 250 (TEIAGTT), 269 to 272 (DTAG), and 334 to 337 (NKAD) each bind GTP. Ser229 contributes to the Mg(2+) binding site. K(+)-binding residues include Thr244, Ile246, and Thr249. A Mg(2+)-binding site is contributed by Thr250. Lys453 is a (6S)-5-formyl-5,6,7,8-tetrahydrofolate binding site.

This sequence belongs to the TRAFAC class TrmE-Era-EngA-EngB-Septin-like GTPase superfamily. TrmE GTPase family. As to quaternary structure, homodimer. Heterotetramer of two MnmE and two MnmG subunits. The cofactor is K(+).

The protein resides in the cytoplasm. In terms of biological role, exhibits a very high intrinsic GTPase hydrolysis rate. Involved in the addition of a carboxymethylaminomethyl (cmnm) group at the wobble position (U34) of certain tRNAs, forming tRNA-cmnm(5)s(2)U34. This chain is tRNA modification GTPase MnmE, found in Aeromonas hydrophila subsp. hydrophila (strain ATCC 7966 / DSM 30187 / BCRC 13018 / CCUG 14551 / JCM 1027 / KCTC 2358 / NCIMB 9240 / NCTC 8049).